Consider the following 837-residue polypeptide: A disintegrin and metalloproteinase with thrombospondin motifs 4 (837 aa).

The N-terminal stretch at 1-51 (MSQTGSHPGRGLAGRWLWGAQPCLLLPIVPLSWLVWLLLLLLASLLPSARL) is a signal peptide. Positions 52–212 (ASPLPREEEI…PSPRPRRAKR (161 aa)) are excised as a propeptide. The N-linked (GlcNAc...) asparagine glycan is linked to Asn68. The short motif at 192–199 (PMCNVKAP) is the Cysteine switch element. A Zn(2+)-binding site is contributed by Cys194. The region spanning 218-428 (RFVETLVVAD…GYGHCLLDKP (211 aa)) is the Peptidase M12B domain. 11 cysteine pairs are disulfide-bonded: Cys293/Cys345, Cys322/Cys327, Cys339/Cys423, Cys377/Cys407, Cys449/Cys472, Cys460/Cys482, Cys467/Cys501, Cys495/Cys506, Cys532/Cys569, Cys536/Cys574, and Cys547/Cys559. His361 lines the Zn(2+) pocket. Residue Glu362 is part of the active site. The Zn(2+) site is built by His365 and His371. Residues 437 to 519 (TFPGKDYDAD…DQLQDFNIPQ (83 aa)) form the Disintegrin domain. A TSP type-1 domain is found at 520–575 (AGGWGPWGPWGDCSRTCGGGVQFSSRDCTRPVPRNGGKYCEGRRTRFRSCNTEDCP). A spacer region spans residues 686-837 (SKQSGSFRKF…LRRRPWAGRK (152 aa)).

As to quaternary structure, interacts with SRPX2. It depends on Zn(2+) as a cofactor. Post-translationally, the precursor is cleaved by a furin endopeptidase. In terms of processing, glycosylated. Can be O-fucosylated by POFUT2 on a serine or a threonine residue found within the consensus sequence C1-X(2)-(S/T)-C2-G of the TSP type-1 repeat domains where C1 and C2 are the first and second cysteine residue of the repeat, respectively. Fucosylated repeats can then be further glycosylated by the addition of a beta-1,3-glucose residue by the glucosyltransferase, B3GALTL. Fucosylation mediates the efficient secretion of ADAMTS family members. Can also be C-glycosylated with one or two mannose molecules on tryptophan residues within the consensus sequence W-X-X-W of the TPRs, and N-glycosylated. These other glycosylations can also facilitate secretion. In terms of tissue distribution, expressed in brain, lung and heart. Expressed at very low level in placenta and skeletal muscles. Isoform 2: Detected in osteoarthritic synovium.

It localises to the secreted. Its subcellular location is the extracellular space. The protein localises to the extracellular matrix. It catalyses the reaction Glutamyl endopeptidase. Bonds cleaved include 370-Thr-Glu-Gly-Glu-|-Ala-Arg-Gly-Ser-377 in the interglobular domain of mammalian aggrecan.. Cleaves aggrecan, a cartilage proteoglycan, at the '392-Glu-|-Ala-393' site and may be involved in its turnover. Also cleaves COMP. May play an important role in the destruction of aggrecan in arthritic diseases. Could be a critical factor in the exacerbation of neurodegeneration in Alzheimer disease. The sequence is that of A disintegrin and metalloproteinase with thrombospondin motifs 4 (ADAMTS4) from Homo sapiens (Human).